A 570-amino-acid polypeptide reads, in one-letter code: Urease subunit alpha (570 aa).

A Urease domain is found at 131–570; the sequence is GGFDSHIHFI…LPMAQRYFMY (440 aa). Ni(2+)-binding residues include histidine 136, histidine 138, and lysine 219. An N6-carboxylysine modification is found at lysine 219. Histidine 221 lines the substrate pocket. Positions 248 and 274 each coordinate Ni(2+). Histidine 322 acts as the Proton donor in catalysis. A Ni(2+)-binding site is contributed by aspartate 362.

This sequence belongs to the metallo-dependent hydrolases superfamily. Urease alpha subunit family. Heterotrimer of UreA (gamma), UreB (beta) and UreC (alpha) subunits. Three heterotrimers associate to form the active enzyme. It depends on Ni cation as a cofactor. Post-translationally, carboxylation allows a single lysine to coordinate two nickel ions.

The protein localises to the cytoplasm. It catalyses the reaction urea + 2 H2O + H(+) = hydrogencarbonate + 2 NH4(+). It functions in the pathway nitrogen metabolism; urea degradation; CO(2) and NH(3) from urea (urease route): step 1/1. This Rhodopseudomonas palustris (strain HaA2) protein is Urease subunit alpha.